A 380-amino-acid chain; its full sequence is Succinyl-diaminopimelate desuccinylase (380 aa).

H69 is a binding site for Zn(2+). The active site involves D71. D102 is a binding site for Zn(2+). E135 serves as the catalytic Proton acceptor. The Zn(2+) site is built by E136, E164, and H353.

This sequence belongs to the peptidase M20A family. DapE subfamily. As to quaternary structure, homodimer. Zn(2+) serves as cofactor. Co(2+) is required as a cofactor.

The enzyme catalyses N-succinyl-(2S,6S)-2,6-diaminopimelate + H2O = (2S,6S)-2,6-diaminopimelate + succinate. It participates in amino-acid biosynthesis; L-lysine biosynthesis via DAP pathway; LL-2,6-diaminopimelate from (S)-tetrahydrodipicolinate (succinylase route): step 3/3. Functionally, catalyzes the hydrolysis of N-succinyl-L,L-diaminopimelic acid (SDAP), forming succinate and LL-2,6-diaminopimelate (DAP), an intermediate involved in the bacterial biosynthesis of lysine and meso-diaminopimelic acid, an essential component of bacterial cell walls. The protein is Succinyl-diaminopimelate desuccinylase of Cereibacter sphaeroides (strain KD131 / KCTC 12085) (Rhodobacter sphaeroides).